A 141-amino-acid polypeptide reads, in one-letter code: Mite group 2 allergen Tyr p 2 (141 aa).

An N-terminal signal peptide occupies residues Met-1 to Ala-15. 3 disulfide bridges follow: Cys-23–Cys-132, Cys-36–Cys-41, and Cys-87–Cys-92. An N-linked (GlcNAc...) asparagine glycan is attached at Asn-103.

It belongs to the NPC2 family.

It is found in the secreted. This Tyrophagus putrescentiae (Mold mite) protein is Mite group 2 allergen Tyr p 2.